A 1383-amino-acid polypeptide reads, in one-letter code: DNA-directed RNA polymerase subunit beta (1383 aa).

Belongs to the RNA polymerase beta chain family. The RNAP catalytic core consists of 2 alpha, 1 beta, 1 beta' and 1 omega subunit. When a sigma factor is associated with the core the holoenzyme is formed, which can initiate transcription.

It carries out the reaction RNA(n) + a ribonucleoside 5'-triphosphate = RNA(n+1) + diphosphate. Its function is as follows. DNA-dependent RNA polymerase catalyzes the transcription of DNA into RNA using the four ribonucleoside triphosphates as substrates. In Xanthomonas axonopodis pv. citri (strain 306), this protein is DNA-directed RNA polymerase subunit beta.